Consider the following 637-residue polypeptide: SCF-associated factor 1 (637 aa).

The F-box domain maps to 14–63; it reads GLSPDIVQATLPFLSSDDIKNLSQTNKYYNTLLDFDHSKILWHELFHKAF. Serine 16 is modified (phosphoserine). Residues 109-202 form an RCC1 1 repeat; the sequence is AKFYSWGYLK…GFSFQILTES (94 aa). The tract at residues 242 to 315 is disordered; that stretch reads YPRITSRSNG…RTTMPSMGPH (74 aa). Positions 244–260 are enriched in polar residues; sequence RITSRSNGSTVNTTGTF. Serine 266 is modified (phosphoserine). Residues 289–305 are compositionally biased toward low complexity; sequence SGGAPAASPGGSHSGVP. The stretch at 565–635 is one RCC1 2 repeat; it reads GHLYSWGIES…GWQTGALIIK (71 aa).

In terms of assembly, interacts with AAH1, SKP1 and CDC53. Component of the SCF(SAF1) complex containing CDC53, SKP1, HRT1 and SAF1.

The protein operates within protein modification; protein ubiquitination. Functionally, substrate recognition component of a SCF (SKP1-CUL1-F-box protein) E3 ubiquitin-protein ligase complex which mediates the ubiquitination and subsequent proteasomal degradation of target proteins. Targets AAH1 adenine deaminase for proteasome-dependent degradation upon entry into quiescence. Targets also URA7. This chain is SCF-associated factor 1 (SAF1), found in Saccharomyces cerevisiae (strain ATCC 204508 / S288c) (Baker's yeast).